We begin with the raw amino-acid sequence, 191 residues long: CASP-like protein 4C2 (191 aa).

Residues 1-29 are Cytoplasmic-facing; the sequence is MEAADSATNNSKDTHFYGKSRAENRRRSD. Residues 30 to 50 traverse the membrane as a helical segment; that stretch reads AMLLLFRALTFSFSLAAVVVM. Residues 51–72 are Extracellular-facing; the sequence is GTNRYRINPQLKVSWYDFEPYR. Residues 73-93 form a helical membrane-spanning segment; the sequence is YVLAVNAIICIYSFVETWLAV. The Cytoplasmic segment spans residues 94–116; sequence YTYLQGSYLLPEIFQVWFDYGHD. A helical transmembrane segment spans residues 117-137; sequence QGFAYLLFSANSAGVAMAQLL. Residues 138-161 lie on the Extracellular side of the membrane; sequence QSGNTLIHGAYHCTEAGGYCTQAR. A helical membrane pass occupies residues 162 to 182; sequence VSIALGFVAFLFLALSSLLTG. The Cytoplasmic portion of the chain corresponds to 183–191; the sequence is LRVARWYLR.

This sequence belongs to the Casparian strip membrane proteins (CASP) family. As to quaternary structure, homodimer and heterodimers.

It localises to the cell membrane. In Physcomitrium patens (Spreading-leaved earth moss), this protein is CASP-like protein 4C2.